The sequence spans 304 residues: Haloalkane dehalogenase (304 aa).

The AB hydrolase-1 domain maps to 42–154 (PIVFLHGNPT…DSVDLSPEFV (113 aa)). Residue Asp-114 is the Nucleophile of the active site. Glu-138 acts as the Proton donor in catalysis. His-280 acts as the Proton acceptor in catalysis.

This sequence belongs to the haloalkane dehalogenase family. Type 2 subfamily. In terms of assembly, monomer.

It carries out the reaction 1-haloalkane + H2O = a halide anion + a primary alcohol + H(+). Catalyzes hydrolytic cleavage of carbon-halogen bonds in halogenated aliphatic compounds, leading to the formation of the corresponding primary alcohols, halide ions and protons. This is Haloalkane dehalogenase from Agrobacterium fabrum (strain C58 / ATCC 33970) (Agrobacterium tumefaciens (strain C58)).